The following is a 299-amino-acid chain: Streptogrisin-B (299 aa).

The signal sequence occupies residues 1–38 (MRIKRTSNRSNAARRVRTTAVLAGLAAVAALAVPTANA). Residues 39–114 (ETPRTFSANQ…ERTPGKFTKL (76 aa)) constitute a propeptide that is removed on maturation. A disulfide bridge links C128 with C148. Catalysis depends on charge relay system residues H147, D177, and S255. C249 and C276 are joined by a disulfide.

It belongs to the peptidase S1 family. In terms of assembly, monomer.

It catalyses the reaction Hydrolysis of proteins with trypsin-like specificity.. Has a primary specificity for large aliphatic or aromatic amino acids. The chain is Streptogrisin-B (sprB) from Streptomyces griseus.